A 271-amino-acid polypeptide reads, in one-letter code: Ribosomal RNA small subunit methyltransferase A (271 aa).

S-adenosyl-L-methionine is bound by residues His-11, Leu-13, Gly-38, Glu-58, Asp-86, and Asn-101.

Belongs to the class I-like SAM-binding methyltransferase superfamily. rRNA adenine N(6)-methyltransferase family. RsmA subfamily.

Its subcellular location is the cytoplasm. It catalyses the reaction adenosine(1518)/adenosine(1519) in 16S rRNA + 4 S-adenosyl-L-methionine = N(6)-dimethyladenosine(1518)/N(6)-dimethyladenosine(1519) in 16S rRNA + 4 S-adenosyl-L-homocysteine + 4 H(+). In terms of biological role, specifically dimethylates two adjacent adenosines (A1518 and A1519) in the loop of a conserved hairpin near the 3'-end of 16S rRNA in the 30S particle. May play a critical role in biogenesis of 30S subunits. This chain is Ribosomal RNA small subunit methyltransferase A, found in Helicobacter pylori (strain Shi470).